The following is a 235-amino-acid chain: 7-cyano-7-deazaguanine synthase (235 aa).

An ATP-binding site is contributed by 8–18 (FSGGQDSTTCL). Cysteine 187, cysteine 196, cysteine 199, and cysteine 202 together coordinate Zn(2+).

The protein belongs to the QueC family. Requires Zn(2+) as cofactor.

It catalyses the reaction 7-carboxy-7-deazaguanine + NH4(+) + ATP = 7-cyano-7-deazaguanine + ADP + phosphate + H2O + H(+). It functions in the pathway purine metabolism; 7-cyano-7-deazaguanine biosynthesis. Catalyzes the ATP-dependent conversion of 7-carboxy-7-deazaguanine (CDG) to 7-cyano-7-deazaguanine (preQ(0)). The sequence is that of 7-cyano-7-deazaguanine synthase from Aeromonas hydrophila subsp. hydrophila (strain ATCC 7966 / DSM 30187 / BCRC 13018 / CCUG 14551 / JCM 1027 / KCTC 2358 / NCIMB 9240 / NCTC 8049).